A 212-amino-acid chain; its full sequence is Fibrillarin-like rRNA/tRNA 2'-O-methyltransferase (212 aa).

S-adenosyl-L-methionine-binding positions include 73–74 (TT), 91–92 (EI), 116–117 (DA), and 136–139 (DVAQ).

Belongs to the methyltransferase superfamily. Fibrillarin family. In terms of assembly, interacts with nop5. Component of box C/D small ribonucleoprotein (sRNP) particles that contain rpl7ae, FlpA and nop5, plus a guide RNA.

Functionally, involved in pre-rRNA and tRNA processing. Utilizes the methyl donor S-adenosyl-L-methionine to catalyze the site-specific 2'-hydroxyl methylation of ribose moieties in rRNA and tRNA. Site specificity is provided by a guide RNA that base pairs with the substrate. Methylation occurs at a characteristic distance from the sequence involved in base pairing with the guide RNA. The chain is Fibrillarin-like rRNA/tRNA 2'-O-methyltransferase from Methanothrix thermoacetophila (strain DSM 6194 / JCM 14653 / NBRC 101360 / PT) (Methanosaeta thermophila).